The sequence spans 351 residues: V-type proton ATPase subunit d1 (351 aa).

This sequence belongs to the V-ATPase V0D/AC39 subunit family. As to quaternary structure, V-ATPase is a heteromultimeric enzyme composed of a peripheral catalytic V1 complex (components A to H) attached to an integral membrane V0 proton pore complex (components: a, c, c'', d and e).

Its subcellular location is the vacuole membrane. Subunit of the integral membrane V0 complex of vacuolar ATPase. Vacuolar ATPase is responsible for acidifying a variety of intracellular compartments in eukaryotic cells, thus providing most of the energy required for transport processes in the vacuolar system. The sequence is that of V-type proton ATPase subunit d1 (VHA-d1) from Arabidopsis thaliana (Mouse-ear cress).